A 417-amino-acid chain; its full sequence is D-amino acid dehydrogenase (417 aa).

Position 3–17 (3–17) interacts with FAD; it reads VIVIGSGVIGLTSAW.

This sequence belongs to the DadA oxidoreductase family. The cofactor is FAD.

It carries out the reaction a D-alpha-amino acid + A + H2O = a 2-oxocarboxylate + AH2 + NH4(+). The protein operates within amino-acid degradation; D-alanine degradation; NH(3) and pyruvate from D-alanine: step 1/1. Oxidative deamination of D-amino acids. The protein is D-amino acid dehydrogenase of Vibrio atlanticus (strain LGP32) (Vibrio splendidus (strain Mel32)).